The following is a 229-amino-acid chain: Cytochrome c oxidase subunit 2 (229 aa).

Residues 1 to 14 are Mitochondrial intermembrane-facing; that stretch reads MANHLQFNFQDATS. Residues 15 to 45 traverse the membrane as a helical segment; it reads PLMQELVKFHDHSLTILFFISALILYVLMMT. The Mitochondrial matrix portion of the chain corresponds to 46–59; the sequence is SLSKLTNKNILDSQ. The chain crosses the membrane as a helical span at residues 60-87; the sequence is EIEMVWTVIPAFILIMLALPSIQILYLM. At 88–229 the chain is on the mitochondrial intermembrane side; that stretch reads DEIASPDITI…FESWIIKLSL (142 aa). Residues histidine 162, cysteine 197, glutamate 199, cysteine 201, histidine 205, and methionine 208 each contribute to the Cu cation site. Glutamate 199 is a binding site for Mg(2+).

Belongs to the cytochrome c oxidase subunit 2 family. In terms of assembly, component of the cytochrome c oxidase (complex IV, CIV), a multisubunit enzyme composed of 14 subunits. The complex is composed of a catalytic core of 3 subunits MT-CO1, MT-CO2 and MT-CO3, encoded in the mitochondrial DNA, and 11 supernumerary subunits COX4I, COX5A, COX5B, COX6A, COX6B, COX6C, COX7A, COX7B, COX7C, COX8 and NDUFA4, which are encoded in the nuclear genome. The complex exists as a monomer or a dimer and forms supercomplexes (SCs) in the inner mitochondrial membrane with NADH-ubiquinone oxidoreductase (complex I, CI) and ubiquinol-cytochrome c oxidoreductase (cytochrome b-c1 complex, complex III, CIII), resulting in different assemblies (supercomplex SCI(1)III(2)IV(1) and megacomplex MCI(2)III(2)IV(2)). Found in a complex with TMEM177, COA6, COX18, COX20, SCO1 and SCO2. Interacts with TMEM177 in a COX20-dependent manner. Interacts with COX20. Interacts with COX16. The cofactor is Cu cation.

The protein resides in the mitochondrion inner membrane. It carries out the reaction 4 Fe(II)-[cytochrome c] + O2 + 8 H(+)(in) = 4 Fe(III)-[cytochrome c] + 2 H2O + 4 H(+)(out). Component of the cytochrome c oxidase, the last enzyme in the mitochondrial electron transport chain which drives oxidative phosphorylation. The respiratory chain contains 3 multisubunit complexes succinate dehydrogenase (complex II, CII), ubiquinol-cytochrome c oxidoreductase (cytochrome b-c1 complex, complex III, CIII) and cytochrome c oxidase (complex IV, CIV), that cooperate to transfer electrons derived from NADH and succinate to molecular oxygen, creating an electrochemical gradient over the inner membrane that drives transmembrane transport and the ATP synthase. Cytochrome c oxidase is the component of the respiratory chain that catalyzes the reduction of oxygen to water. Electrons originating from reduced cytochrome c in the intermembrane space (IMS) are transferred via the dinuclear copper A center (CU(A)) of subunit 2 and heme A of subunit 1 to the active site in subunit 1, a binuclear center (BNC) formed by heme A3 and copper B (CU(B)). The BNC reduces molecular oxygen to 2 water molecules using 4 electrons from cytochrome c in the IMS and 4 protons from the mitochondrial matrix. This Myxine glutinosa (Atlantic hagfish) protein is Cytochrome c oxidase subunit 2 (MT-CO2).